A 383-amino-acid polypeptide reads, in one-letter code: MFEPMELTNDAVIKVIGVGGGGGNAVEHMVRERIEGVEFFAVNTDAQALRKTAVGQTIQIGSGITKGLGAGANPEVGRNAADEDRDALRAALEGADMVFIAAGMGGGTGTGAAPVVAEVAKDLGILTVAVVTKPFNFEGKKRMAFAEQGITELSKHVDSLITIPNDKLLKVLGRGISLLDAFGAANDVLKGAVQGIAELITRPGLMNVDFADVRTVMSEMGYAMMGSGVASGEDRAEEAAEMAISSPLLEDIDLSGARGVLVNITAGFDLRLDEFETVGNTIRAFASDNATVVIGTSLDPDMNDELRVTVVATGIGMDKRPEITLVTNKQVQQPVMDRYQQHGMAPLTQEQKPVAKVVNDNAPQTAKEPDYLDIPAFLRKQAD.

Residues 20-24, 107-109, Glu-138, Arg-142, and Asn-186 each bind GTP; these read GGGGN and GTG.

This sequence belongs to the FtsZ family. As to quaternary structure, homodimer. Polymerizes to form a dynamic ring structure in a strictly GTP-dependent manner. Interacts directly with several other division proteins.

It localises to the cytoplasm. Essential cell division protein that forms a contractile ring structure (Z ring) at the future cell division site. The regulation of the ring assembly controls the timing and the location of cell division. One of the functions of the FtsZ ring is to recruit other cell division proteins to the septum to produce a new cell wall between the dividing cells. Binds GTP and shows GTPase activity. The polypeptide is Cell division protein FtsZ (Escherichia coli O157:H7).